The sequence spans 470 residues: ESX-4 secretion system ATPase EccB4 (470 aa).

The helical transmembrane segment at 44–64 (LALGCVLAIVAAMGCAFVALL) threads the bilayer.

Belongs to the EccB family. In terms of assembly, part of the ESX-4 / type VII secretion system (T7SS), which is composed of cytosolic and membrane components.

The protein resides in the cell membrane. Its function is as follows. An ATPase. In Mycobacterium tuberculosis (strain CDC 1551 / Oshkosh), this protein is ESX-4 secretion system ATPase EccB4 (eccB4).